Reading from the N-terminus, the 142-residue chain is Protein E6 (142 aa).

Zinc fingers lie at residues 30–66 (CVFCRFYLTEQQLAAFYIKNLKLVWKNRYCFACCTPC) and 103–139 (CFDCLTLLSFAEKIDCIISGQNFYLVRGRWRSYCRNC).

This sequence belongs to the papillomaviridae E6 protein family. In terms of assembly, forms homodimers. Interacts with ubiquitin-protein ligase UBE3A/E6-AP; this interaction stimulates UBE3A ubiquitin activity. Interacts with host BAK1.

It localises to the host cytoplasm. The protein localises to the host nucleus. Its function is as follows. Plays a major role in the induction and maintenance of cellular transformation. E6 associates with host UBE3A/E6-AP ubiquitin-protein ligase and modulates its activity. Protects host keratinocytes from apoptosis by mediating the degradation of host BAK1. May also inhibit host immune response. The sequence is that of Protein E6 from Homo sapiens (Human).